The primary structure comprises 565 residues: Probable protease Gilli_2517 (565 aa).

Probably a dedicated protease for substrate gasdermin bGSDM; cleaves the bGSDM precursor, releasing the pore-forming moiety, which integrates into the membrane and triggers cell death. Involved in defense against bacteriophages. Expression of bGSDM and this neighboring protease is not toxic in E.coli. This is Probable protease Gilli_2517 from Gillisia limnaea (strain DSM 15749 / LMG 21470 / R-8282).